The sequence spans 996 residues: Low-density lipoprotein receptor-related protein 8 (996 aa).

A signal peptide spans 1-28 (MGRPELGALRPLALLLLLLLQLQHLSAA). The Extracellular portion of the chain corresponds to 29–858 (DPLPGGQGPV…GSQMGSTVTA (830 aa)). LDL-receptor class A domains are found at residues 40-76 (ECEE…DDCP), 79-117 (TCAD…ATCS), 120-158 (ECPA…AGCP), 160-196 (LCAP…RGCS), 199-238 (ACPP…ELCG), 250-287 (ACAP…ADCS), 290-326 (PCRE…AGCL), and 330-369 (TCEG…KVCG). 30 disulfide bridges follow: C41/C53, C48/C66, C60/C75, C80/C92, C87/C105, C99/C116, C121/C135, C128/C148, C142/C157, C161/C173, C168/C186, C180/C195, C200/C213, C207/C226, C220/C237, C251/C264, C259/C277, C271/C286, C291/C303, C298/C316, C310/C325, C331/C344, C339/C357, C351/C368, C373/C384, C380/C393, C395/C407, C413/C423, C419/C432, and C434/C447. The Ca(2+) site is built by W58, D61, D63, D65, D71, and E72. N170 is a glycosylation site (N-linked (GlcNAc...) asparagine). One can recognise an EGF-like 1 domain in the interval 364–408 (PQKVCGLNECLHNNGGCSHICTDLKIGFECTCPAGFQLLDQKTCG). Residues 409-448 (DIDECQDPDACSQICVNYKGYFKCECHPGYEMDTLTKNCK) enclose the EGF-like 2; calcium-binding domain. 5 LDL-receptor class B repeats span residues 495–541 (NRIY…DWVH), 542–584 (KHIY…DPLR), 585–628 (GFMY…DLLS), 629–671 (QRLY…AVFE), and 672–714 (DKVF…FHEL). N-linked (GlcNAc...) asparagine glycosylation occurs at N551. Residues 773–831 (STSTTTLASAMTRTVPATTRAPGTTIHDPTYQNHSTETPSQTAAAPHSVNVPRAPSTSP) are clustered O-linked oligosaccharides. The disordered stretch occupies residues 778 to 851 (TLASAMTRTV…SQHYGNEGSQ (74 aa)). The segment covering 802-815 (TYQNHSTETPSQTA) has biased composition (polar residues). N805 is a glycosylation site (N-linked (GlcNAc...) asparagine). Residues 824–839 (PRAPSTSPSTPSPATS) show a composition bias toward low complexity. An N-linked (GlcNAc...) asparagine glycan is attached at N840. Residues 840–851 (NHSQHYGNEGSQ) show a composition bias toward polar residues. Residues 859-881 (AVIGVIVPIVVIALLCMSGYLIW) form a helical membrane-spanning segment. At 882–996 (RNWKRKNTKS…ALSLEDDGLP (115 aa)) the chain is on the cytoplasmic side.

This sequence belongs to the LDLR family. As to quaternary structure, homooligomer. Interacts with VLDLR. Reelin associates with two or more receptor molecules. Interacts with DAB1 and JNK-interacting proteins. Interacts with SNX17. Interacts with PCSK9. Interacts with MDK; this interaction is calcium dependent. Interacts with CLU. Post-translationally, O-glycosylated. Some alternatively spliced isoforms lack the O-linked sugar domain. Undergoes sequential, furin and gamma-secretase dependent, proteolytic processing, resulting in the extracellular release of the entire ligand-binding domain as a soluble polypeptide and in the intracellular domain (ICD) release into the cytoplasm. The gamma-secretase-dependent proteolytical processing occurs after the bulk of the extracellular domain has been shed, in a furin-dependent manner, in alternatively spliced isoforms carrying the furin cleavage site. Hypoglycosylation (mainly hypo-O-glycosylation) leads to increased extracellular cleavage, which in turn results in accelerating release of the intracellular domain (ICD) by the gamma-secretase. The resulting receptor fragment is able to inhibit Reelin signaling and in particular the Reelin-induced DAB1 phosphorylation. In terms of processing, tyrosine phosphorylated upon apoE binding. Post-translationally, ubiquitinated by MYLIP leading to degradation. As to expression, expressed in neurons throughout the brain, with strong expression in pyramidal neurons of the hippocampus, granule cells of the dentate gyrus, cortical neurons and Purkinje cells of the cerebellum. Also expressed in the epithelium of the choroid plexus and of the blood vessels (apical expression), as well as in the epididymis.

The protein localises to the cell membrane. The protein resides in the secreted. Functionally, cell surface receptor for Reelin (RELN) and apolipoprotein E (apoE)-containing ligands. LRP8 participates in transmitting the extracellular Reelin signal to intracellular signaling processes, by binding to DAB1 on its cytoplasmic tail. Reelin acts via both the VLDL receptor (VLDLR) and LRP8 to regulate DAB1 tyrosine phosphorylation and microtubule function in neurons. LRP8 has higher affinity for Reelin than VLDLR. LRP8 is thus a key component of the Reelin pathway which governs neuronal layering of the forebrain during embryonic brain development. Binds the endoplasmic reticulum resident receptor-associated protein (RAP). Binds dimers of beta 2-glycoprotein I and may be involved in the suppression of platelet aggregation in the vasculature. Highly expressed in the initial segment of the epididymis, where it affects the functional expression of clusterin and phospholipid hydroperoxide glutathione peroxidase (PHGPx), two proteins required for sperm maturation. May also function as an endocytic receptor. Not required for endocytic uptake of SEPP1 in the kidney which is mediated by LRP2. Together with its ligand, apolipoprotein E (apoE), may indirectly play a role in the suppression of the innate immune response by controlling the survival of myeloid-derived suppressor cells. This is Low-density lipoprotein receptor-related protein 8 (Lrp8) from Mus musculus (Mouse).